The sequence spans 192 residues: Elongation factor P (192 aa).

It belongs to the elongation factor P family.

It is found in the cytoplasm. It functions in the pathway protein biosynthesis; polypeptide chain elongation. Functionally, involved in peptide bond synthesis. Stimulates efficient translation and peptide-bond synthesis on native or reconstituted 70S ribosomes in vitro. Probably functions indirectly by altering the affinity of the ribosome for aminoacyl-tRNA, thus increasing their reactivity as acceptors for peptidyl transferase. The polypeptide is Elongation factor P (Borrelia duttonii (strain Ly)).